Reading from the N-terminus, the 441-residue chain is Putative F-box protein At1g33530 (441 aa).

The F-box domain occupies 91 to 137; that stretch reads TTLAVELPDVLVEEILQRLPVKYLVRLKSISKGWKSLIESDHLAEKH.

The chain is Putative F-box protein At1g33530 from Arabidopsis thaliana (Mouse-ear cress).